The chain runs to 1447 residues: Spike glycoprotein (1447 aa).

The signal sequence occupies residues 1-28 (MKKLFVVLVVMPLIYGDNFPCSKLTNRT). 2 S1 regions span residues 17–774 (DNFP…FYYY) and 29–774 (IGNQ…FYYY). Residues 29–1388 (IGNQWNLIET…NRIETYVKWP (1360 aa)) are Virion surface-facing. Residues 655–799 (VIYEEGDNIV…DSNDVDCEPV (145 aa)) form an interaction with host ANPEP region. Residues 775 to 1447 (SIYNYTNDRT…YEPIEKVHVH (673 aa)) are S2. Residues 1020–1041 (AGGITLGALGGGAVAIPFAVAV) form a fusion peptide region. A heptad repeat 1 (HR1) region spans residues 1035–1154 (IPFAVAVQAR…QVDRLITGRL (120 aa)). Coiled coils occupy residues 1102-1146 (QDVV…DAQV) and 1336-1378 (TYLN…LEWL). The interval 1303–1400 (PDYIDINQTV…VWLLIGLVVI (98 aa)) is heptad repeat 2 (HR2). A helical membrane pass occupies residues 1389 to 1408 (WYVWLLIGLVVIFCIPLLLF). The Intravirion portion of the chain corresponds to 1409–1447 (CCCSTGCCGCIGCLGSCCHSICSRRQFENYEPIEKVHVH). The KxHxx motif lies at 1443-1447 (KVHVH).

It belongs to the alphacoronaviruses spike protein family. Homotrimer. During virus morphogenesis, found in a complex with M and HE proteins. Interacts with host ANPEP.

Its subcellular location is the virion membrane. It is found in the host endoplasmic reticulum-Golgi intermediate compartment membrane. S1 region attaches the virion to the cell membrane by interacting with host ANPEP/aminopeptidase N, initiating the infection. Binding to the receptor probably induces conformational changes in the S glycoprotein unmasking the fusion peptide of S2 region and activating membranes fusion. S2 region belongs to the class I viral fusion protein. Under the current model, the protein has at least 3 conformational states: pre-fusion native state, pre-hairpin intermediate state, and post-fusion hairpin state. During viral and target cell membrane fusion, the coiled coil regions (heptad repeats) regions assume a trimer-of-hairpins structure, positioning the fusion peptide in close proximity to the C-terminal region of the ectodomain. The formation of this structure appears to drive apposition and subsequent fusion of viral and target cell membranes. The protein is Spike glycoprotein of Sus scrofa (Pig).